The sequence spans 97 residues: Homeobox protein HD-9 (97 aa).

Positions 6–65 (MPAKKSRLSKAQRDFLDTYFEVNPHPNTQERAYIASQSLVSEEKIRNWFQNRRTRERGDC) form a DNA-binding region, homeobox.

It is found in the nucleus. This chain is Homeobox protein HD-9 (HD-9), found in Encephalitozoon cuniculi (strain GB-M1) (Microsporidian parasite).